Consider the following 190-residue polypeptide: UPF0149 protein NT01EI_3357 (190 aa).

The protein belongs to the UPF0149 family.

The protein is UPF0149 protein NT01EI_3357 of Edwardsiella ictaluri (strain 93-146).